A 138-amino-acid chain; its full sequence is von Willebrand factor C domain-containing protein 2-like (138 aa).

A signal peptide spans 1-21; the sequence is MALHIHEACILLLVIPGLVTS. Residues 51 to 110 enclose the VWFC domain; sequence KGCVDDSGFVYKLGERFFPGHSNCPCVCALDGPVCDQPECPKIHPKCTKVEHNGCCPECK.

Peripherally associated with AMPAR complex. AMPAR complex consists of an inner core made of 4 pore-forming GluA/GRIA proteins (GRIA1, GRIA2, GRIA3 and GRIA4) and 4 major auxiliary subunits arranged in a twofold symmetry. One of the two pairs of distinct binding sites is occupied either by CNIH2, CNIH3 or CACNG2, CACNG3. The other harbors CACNG2, CACNG3, CACNG4, CACNG8 or GSG1L. This inner core of AMPAR complex is complemented by outer core constituents binding directly to the GluA/GRIA proteins at sites distinct from the interaction sites of the inner core constituents. Outer core constituents include at least PRRT1, PRRT2, CKAMP44/SHISA9, FRRS1L and NRN1. The proteins of the inner and outer core serve as a platform for other, more peripherally associated AMPAR constituents, including VWC2L. Alone or in combination, these auxiliary subunits control the gating and pharmacology of the AMPAR complex and profoundly impact their biogenesis and protein processing.

It localises to the secreted. The protein resides in the synapse. In terms of biological role, may play a role in neurogenesis. May play a role in bone differentiation and matrix mineralization. This is von Willebrand factor C domain-containing protein 2-like (VWC2L) from Macaca fascicularis (Crab-eating macaque).